Reading from the N-terminus, the 404-residue chain is Probable tRNA sulfurtransferase (404 aa).

The 106-residue stretch at 60–165 (EPVAEALKNV…DEAAYISHEE (106 aa)) folds into the THUMP domain. ATP is bound by residues 183-184 (ML), 208-209 (HF), Arg265, Gly287, and Gln296.

Belongs to the ThiI family.

The protein resides in the cytoplasm. The catalysed reaction is [ThiI sulfur-carrier protein]-S-sulfanyl-L-cysteine + a uridine in tRNA + 2 reduced [2Fe-2S]-[ferredoxin] + ATP + H(+) = [ThiI sulfur-carrier protein]-L-cysteine + a 4-thiouridine in tRNA + 2 oxidized [2Fe-2S]-[ferredoxin] + AMP + diphosphate. It catalyses the reaction [ThiS sulfur-carrier protein]-C-terminal Gly-Gly-AMP + S-sulfanyl-L-cysteinyl-[cysteine desulfurase] + AH2 = [ThiS sulfur-carrier protein]-C-terminal-Gly-aminoethanethioate + L-cysteinyl-[cysteine desulfurase] + A + AMP + 2 H(+). It functions in the pathway cofactor biosynthesis; thiamine diphosphate biosynthesis. Its function is as follows. Catalyzes the ATP-dependent transfer of a sulfur to tRNA to produce 4-thiouridine in position 8 of tRNAs, which functions as a near-UV photosensor. Also catalyzes the transfer of sulfur to the sulfur carrier protein ThiS, forming ThiS-thiocarboxylate. This is a step in the synthesis of thiazole, in the thiamine biosynthesis pathway. The sulfur is donated as persulfide by IscS. This is Probable tRNA sulfurtransferase from Streptococcus uberis (strain ATCC BAA-854 / 0140J).